The chain runs to 364 residues: DNA primase large subunit PriL (364 aa).

[4Fe-4S] cluster contacts are provided by Cys237, Cys309, Cys318, and Cys325. Positions 345 to 364 are disordered; it reads MQNDNEKGHEEKKEGETPPQ.

This sequence belongs to the eukaryotic-type primase large subunit family. In terms of assembly, heterodimer of a small subunit (PriS) and a large subunit (PriL). It depends on [4Fe-4S] cluster as a cofactor.

Its function is as follows. Regulatory subunit of DNA primase, an RNA polymerase that catalyzes the synthesis of short RNA molecules used as primers for DNA polymerase during DNA replication. Stabilizes and modulates the activity of the small subunit, increasing the rate of DNA synthesis, and conferring RNA synthesis capability. The DNA polymerase activity may enable DNA primase to also catalyze primer extension after primer synthesis. May also play a role in DNA repair. The protein is DNA primase large subunit PriL of Methanococcoides burtonii (strain DSM 6242 / NBRC 107633 / OCM 468 / ACE-M).